We begin with the raw amino-acid sequence, 353 residues long: Stomatin-like protein 2, mitochondrial (353 aa).

The N-terminal 28 residues, 1–28 (MLARAARGTGALLLRGSVQASGRVPRRA), are a transit peptide targeting the mitochondrion. Residue serine 17 is modified to Phosphoserine; by PKC/PRKCZ. Tyrosine 124 carries the post-translational modification Phosphotyrosine. At lysine 145 the chain carries N6-acetyllysine; alternate. Lysine 145 is subject to N6-succinyllysine; alternate. A coiled-coil region spans residues 215–252 (INVAEGKKQAQILASEAEKAEQINQAAGEASAVLAKAK). Lysine 233 carries the post-translational modification N6-acetyllysine. The segment at 324–353 (VPGAQNSSQSRRDVQATDTSIEELGRVKLS) is disordered. Position 330 is a phosphoserine (serine 330).

This sequence belongs to the band 7/mec-2 family. Forms homooligomers. Interacts with MFN2; may form heterooligomers. Interacts with PHB1 and PHB2; recruits them to cardiolipin-enriched mitochondrial membranes and stabilizes them. Interacts with CACNA2D2.

It is found in the cell membrane. Its subcellular location is the mitochondrion. It localises to the mitochondrion inner membrane. The protein localises to the mitochondrion intermembrane space. The protein resides in the membrane raft. It is found in the cytoplasm. Its subcellular location is the cytoskeleton. Its function is as follows. Mitochondrial protein that probably regulates the biogenesis and the activity of mitochondria. Stimulates cardiolipin biosynthesis, binds cardiolipin-enriched membranes where it recruits and stabilizes some proteins including prohibitin and may therefore act in the organization of functional microdomains in mitochondrial membranes. Through regulation of the mitochondrial function may play a role into several biological processes including cell migration, cell proliferation, T-cell activation, calcium homeostasis and cellular response to stress. May play a role in calcium homeostasis through negative regulation of calcium efflux from mitochondria. Required for mitochondrial hyperfusion a pro-survival cellular response to stress which results in increased ATP production by mitochondria. May also regulate the organization of functional domains at the plasma membrane and play a role in T-cell activation through association with the T-cell receptor signaling complex and its regulation. This Mus musculus (Mouse) protein is Stomatin-like protein 2, mitochondrial (Stoml2).